We begin with the raw amino-acid sequence, 186 residues long: Peptide deformylase (186 aa).

The Fe cation site is built by Cys-99 and His-141. The active site involves Glu-142. Position 145 (His-145) interacts with Fe cation.

The protein belongs to the polypeptide deformylase family. Requires Fe(2+) as cofactor.

The enzyme catalyses N-terminal N-formyl-L-methionyl-[peptide] + H2O = N-terminal L-methionyl-[peptide] + formate. In terms of biological role, removes the formyl group from the N-terminal Met of newly synthesized proteins. Requires at least a dipeptide for an efficient rate of reaction. N-terminal L-methionine is a prerequisite for activity but the enzyme has broad specificity at other positions. The polypeptide is Peptide deformylase (Chlamydia pneumoniae (Chlamydophila pneumoniae)).